A 314-amino-acid chain; its full sequence is Ribosomal RNA small subunit methyltransferase H (314 aa).

S-adenosyl-L-methionine contacts are provided by residues 35–37 (GGH), Asp54, Phe83, Asp104, and Gln111.

Belongs to the methyltransferase superfamily. RsmH family.

The protein resides in the cytoplasm. The catalysed reaction is cytidine(1402) in 16S rRNA + S-adenosyl-L-methionine = N(4)-methylcytidine(1402) in 16S rRNA + S-adenosyl-L-homocysteine + H(+). Specifically methylates the N4 position of cytidine in position 1402 (C1402) of 16S rRNA. In Oenococcus oeni (strain ATCC BAA-331 / PSU-1), this protein is Ribosomal RNA small subunit methyltransferase H.